The sequence spans 298 residues: Quinolinate synthase (298 aa).

His19 and Ser36 together coordinate iminosuccinate. Residue Cys81 participates in [4Fe-4S] cluster binding. Iminosuccinate-binding positions include 107 to 109 and Ser124; that span reads YVN. Residue Cys168 participates in [4Fe-4S] cluster binding. Iminosuccinate is bound by residues 193–195 and Thr210; that span reads HPE. Cys254 serves as a coordination point for [4Fe-4S] cluster.

Belongs to the quinolinate synthase family. Type 2 subfamily. [4Fe-4S] cluster is required as a cofactor.

It is found in the cytoplasm. The catalysed reaction is iminosuccinate + dihydroxyacetone phosphate = quinolinate + phosphate + 2 H2O + H(+). Its pathway is cofactor biosynthesis; NAD(+) biosynthesis; quinolinate from iminoaspartate: step 1/1. With respect to regulation, inhibited by 4,5 dithiohydroxyphthalic acid (DTHPA) analogs, which bind to the catalytic iron site of the [4Fe-4S] cluster. Functionally, catalyzes the condensation of iminoaspartate with dihydroxyacetone phosphate to form quinolinate. The chain is Quinolinate synthase from Thermotoga maritima (strain ATCC 43589 / DSM 3109 / JCM 10099 / NBRC 100826 / MSB8).